Reading from the N-terminus, the 274-residue chain is Long chain fatty acid elongase 6 (274 aa).

Topologically, residues 1–30 (MPQGEVSFFEVLTTAPFSHELSKKHIAQTQ) are extracellular. Residues 31-51 (YAAFWISMAYVVVIFGLKAVM) traverse the membrane as a helical segment. Topologically, residues 52-69 (TNRKPFDLTGPLNLWNAG) are cytoplasmic. A helical membrane pass occupies residues 70–90 (LAIFSTLGSLATTFGLLHEFF). Over 91–111 (SRGFFESYIHIGDFYNGLSGM) the chain is Extracellular. The helical transmembrane segment at 112-132 (FTWLFVLSKVAEFGDTLFIIL) threads the bilayer. The Cytoplasmic segment spans residues 133–135 (RKK). The helical transmembrane segment at 136-156 (PLMFLHWYHHVLTMNYAFMSF) threads the bilayer. Residues 157–159 (EAN) lie on the Extracellular side of the membrane. A helical membrane pass occupies residues 160 to 180 (LGFNTWITWMNFSVHSIMYGY). The Cytoplasmic portion of the chain corresponds to 181–202 (YMLRSFGVKVPAWIAKNITTMQ). Residues 203–223 (ILQFVITHFILFHVGYLAVTG) traverse the membrane as a helical segment. Topologically, residues 224–230 (QSVDSTP) are extracellular. The helical transmembrane segment at 231–251 (GYYWFCLLMEISYVVLFGNFY) threads the bilayer. Residues 252–274 (YQSYIKGGGKKFNAEKKTEKKIE) lie on the Cytoplasmic side of the membrane.

This sequence belongs to the ELO family. Expressed in the gut, neurons, pharynx and muscles of the vulva.

Its subcellular location is the membrane. It carries out the reaction isopentadecanoyl-CoA + malonyl-CoA + H(+) = 3-oxoisoheptadecanoyl-CoA + CO2 + CoA. Its pathway is lipid metabolism; fatty acid biosynthesis. In terms of biological role, catalyzes the first and rate-limiting reaction of the four reactions that constitute the long-chain fatty acids elongation cycle. Uses malonyl-CoA to add 2 carbons per cycle to the chain of long-chain fatty acids. Condensing enzyme required for the formation of isoheptadecanoate (C17iso), which plays critical roles in animal development and growth. The sequence is that of Long chain fatty acid elongase 6 (elo-6) from Caenorhabditis elegans.